The chain runs to 806 residues: Phenylalanine--tRNA ligase beta subunit (806 aa).

A tRNA-binding domain is found at 40-155 (NKGVKGVVVG…SDAEVGADAL (116 aa)). Residues 409–484 (VQERTVSVTA…RLYGYDHIPV (76 aa)) enclose the B5 domain. 4 residues coordinate Mg(2+): D462, D468, E471, and E472. The FDX-ACB domain maps to 712 to 805 (PRFPSMTRDM…VEEKFGAELR (94 aa)).

It belongs to the phenylalanyl-tRNA synthetase beta subunit family. Type 1 subfamily. In terms of assembly, tetramer of two alpha and two beta subunits. Requires Mg(2+) as cofactor.

It localises to the cytoplasm. It catalyses the reaction tRNA(Phe) + L-phenylalanine + ATP = L-phenylalanyl-tRNA(Phe) + AMP + diphosphate + H(+). The sequence is that of Phenylalanine--tRNA ligase beta subunit from Bacillus thuringiensis subsp. konkukian (strain 97-27).